The sequence spans 213 residues: Protein PAE0745 (213 aa).

One can recognise an AMMECR1 domain in the interval 8-201 (EEGTFLVRLA…EKSPGGEVYE (194 aa)).

In Pyrobaculum aerophilum (strain ATCC 51768 / DSM 7523 / JCM 9630 / CIP 104966 / NBRC 100827 / IM2), this protein is Protein PAE0745.